A 617-amino-acid chain; its full sequence is UvrABC system protein C (617 aa).

The GIY-YIG domain maps to 22–100 (KLPGVYRFFD…IKALSPKYNI (79 aa)). The UVR domain maps to 209-244 (DELTRTLQHKMQTAAANLQFEEAARYRDQIQALGIM).

The protein belongs to the UvrC family. As to quaternary structure, interacts with UvrB in an incision complex.

It localises to the cytoplasm. Its function is as follows. The UvrABC repair system catalyzes the recognition and processing of DNA lesions. UvrC both incises the 5' and 3' sides of the lesion. The N-terminal half is responsible for the 3' incision and the C-terminal half is responsible for the 5' incision. The sequence is that of UvrABC system protein C from Neisseria meningitidis serogroup A / serotype 4A (strain DSM 15465 / Z2491).